Consider the following 970-residue polypeptide: MSKVSGANETLQGALAPLSHMGGGGDATLLKDEGQVELPRGPGVLNVQVLPEEGHAHLQDLEGYKSMDPRQSESASTDVSEMLQHTASLDDPIQFTRVSTSSVTSNSSSDPRESGDTQETGSRRGCSTEEQAPAGAERVSGQDQDSWDVEEVVAEPRSGIDVTPVGDVTNSTIRASGRSAESTSHYLDEYSDTRYSSSSPSSGSRKLSTTIITPEKNVVAQALHCYADNYESPLNDLMSSGDERSSSVRETSFENASSDTNANLNGGRASTGESMRSPPPATGLPNGFVHTQASAPALPVLPAKSPFRAVQSPFSGTRKSRNSANLAELSLPRTSTSSASSMEQRKSRGGRMKVVLSSFVQNIRRNSQGEKRRSGTAMKISTPYNATHVHHVGVDSRTGEYTGLPEEWERLLASSGISKKEQQQHPQAVMDIVKFYQDVTGTSGEDKVFKTFNVSSTNACELSSSPSFKTPSLSSITRFEGSHEAYNSAYHSPMLQSPMGFHDPQHDEKFIPSRPAPRPPGGAAPKTDFTSPLAYDSQSATATPKNQRFSNQSSGFFSLARKATLNKNKQQLPPIPSAAAASAPITQPGSTANIPYIKPAENPVSAPSKSIPPSLPAVPTPPPPIEKDPPLRDLEREREREHSSAKQGQLALERKREEKRRRNQKLQAKLAEICSPGDPSKIYRNLVKIGQGASGGVYTAYEIGTNASVAIKQMNLEKQPKKELIINEILVMKGSRHNNIVNFIDSYLLKGDLWVIMEYMEGGSLTDVVTHCILTEGQIAAVSRETLRGLHFLHSKGVIHRDIKSDNILLSMDGNIKLTDFGFCAQINETNLKRTTMVGTPYWMAPEVVSRKEYGPKVDIWSLGIMIIEMIEGEPPYLNETPLRALYLIATNGTPKLKDADSLSPVLKRFLSWCLQVSPNDRATAMELLYDKFIVEVAEANASLAPLVKLARMKKLAEKMDADSDDNRTD.

A compositionally biased stretch (polar residues) spans 1 to 11 (MSKVSGANETL). 4 disordered regions span residues 1-42 (MSKV…PRGP), 86-185 (TASL…STSH), 236-284 (DLMS…ATGL), and 311-351 (QSPF…RGGR). Positions 98–109 (VSTSSVTSNSSS) are enriched in low complexity. Composition is skewed to polar residues over residues 168-185 (VTNSTIRASGRSAESTSH), 248-264 (VRETSFENASSDTNANL), and 312-325 (SPFSGTRKSRNSAN). The region spanning 380–393 (ISTPYNATHVHHVG) is the CRIB domain. Disordered stretches follow at residues 499–551 (MGFH…RFSN) and 592–663 (ANIP…RRRN). The span at 536 to 551 (DSQSATATPKNQRFSN) shows a compositional bias: polar residues. The span at 613-624 (PSLPAVPTPPPP) shows a compositional bias: pro residues. Residues 625–644 (IEKDPPLRDLEREREREHSS) are compositionally biased toward basic and acidic residues. One can recognise a Protein kinase domain in the interval 683-934 (YRNLVKIGQG…AMELLYDKFI (252 aa)). ATP contacts are provided by residues 689–697 (IGQGASGGV) and Lys712. The active-site Proton acceptor is Asp802.

Belongs to the protein kinase superfamily. STE Ser/Thr protein kinase family. STE20 subfamily.

It localises to the cytoplasm. Its subcellular location is the nucleus. The catalysed reaction is L-seryl-[protein] + ATP = O-phospho-L-seryl-[protein] + ADP + H(+). It catalyses the reaction L-threonyl-[protein] + ATP = O-phospho-L-threonyl-[protein] + ADP + H(+). In terms of biological role, MAP4K component of the MAPK pathway required for the mating pheromone response and the regulation of cell polarity and cell cycle. Phosphorylates histone H2B to form H2BS10ph. In Eremothecium gossypii (strain ATCC 10895 / CBS 109.51 / FGSC 9923 / NRRL Y-1056) (Yeast), this protein is Serine/threonine-protein kinase STE20 (STE20).